The sequence spans 546 residues: Glutamate--tRNA ligase (546 aa).

The 'HIGH' region signature appears at 42–52; it reads PSPTGFIHLGN. The 'KMSKS' region signature appears at 293-297; sequence KLSKR. An ATP-binding site is contributed by lysine 296.

This sequence belongs to the class-I aminoacyl-tRNA synthetase family. Glutamate--tRNA ligase type 1 subfamily. In terms of assembly, monomer.

The protein resides in the cytoplasm. It carries out the reaction tRNA(Glu) + L-glutamate + ATP = L-glutamyl-tRNA(Glu) + AMP + diphosphate. Functionally, catalyzes the attachment of glutamate to tRNA(Glu) in a two-step reaction: glutamate is first activated by ATP to form Glu-AMP and then transferred to the acceptor end of tRNA(Glu). The polypeptide is Glutamate--tRNA ligase (Acetivibrio thermocellus (strain ATCC 27405 / DSM 1237 / JCM 9322 / NBRC 103400 / NCIMB 10682 / NRRL B-4536 / VPI 7372) (Clostridium thermocellum)).